Consider the following 205-residue polypeptide: Ribonuclease HII (205 aa).

The 191-residue stretch at 15–205 folds into the RNase H type-2 domain; it reads SRVCGIDEAG…SFKLRKLGEK (191 aa). 3 residues coordinate a divalent metal cation: Asp21, Glu22, and Asp117.

The protein belongs to the RNase HII family. Mn(2+) serves as cofactor. Mg(2+) is required as a cofactor.

It localises to the cytoplasm. The enzyme catalyses Endonucleolytic cleavage to 5'-phosphomonoester.. Endonuclease that specifically degrades the RNA of RNA-DNA hybrids. This Chlorobaculum parvum (strain DSM 263 / NCIMB 8327) (Chlorobium vibrioforme subsp. thiosulfatophilum) protein is Ribonuclease HII.